A 183-amino-acid chain; its full sequence is Calcineurin subunit B type 2 (183 aa).

G2 carries the N-myristoyl glycine lipid modification. EF-hand domains lie at 25–60, 64–92, 94–129, and 135–170; these read REIKRLYKRFKRLDKEEKGSINVEDFNQIPELSMNP, RIISIFDVNRDGQVNFKQFVKSLSTFHPK, DKADKIKILFKVYDINNDGFITRDEIETILTMMVGS, and QISSIVEETLNEADVNGKGKLDYPDFYNSIGSSGCN. Residues D107, N109, D111, and E118 each contribute to the Ca(2+) site.

This sequence belongs to the calcineurin regulatory subunit family. As to quaternary structure, calcineurin is composed of a catalytic subunit (A) and a regulatory subunit (B).

Its function is as follows. Regulatory subunit of calcineurin, a calcium-dependent, calmodulin stimulated protein phosphatase. Confers calcium sensitivity. The chain is Calcineurin subunit B type 2 (cnbB) from Dictyostelium discoideum (Social amoeba).